Consider the following 403-residue polypeptide: Cytoplasmic tRNA 2-thiolation protein 2 (403 aa).

The protein belongs to the CTU2/NCS2 family.

Its subcellular location is the cytoplasm. Its pathway is tRNA modification; 5-methoxycarbonylmethyl-2-thiouridine-tRNA biosynthesis. Plays a central role in 2-thiolation of mcm(5)S(2)U at tRNA wobble positions of tRNA(Lys), tRNA(Glu) and tRNA(Gln). May act by forming a heterodimer with NCS6/CTU1 that ligates sulfur from thiocarboxylated URM1 onto the uridine of tRNAs at wobble position. The polypeptide is Cytoplasmic tRNA 2-thiolation protein 2 (Drosophila ananassae (Fruit fly)).